The sequence spans 764 residues: PFL-like enzyme TdcE (764 aa).

In terms of domain architecture, PFL spans 7–629 (TSDKLYADAW…KTGNTPDGRR (623 aa)). Catalysis depends on C423, which acts as the S-acetylcysteine intermediate. Catalysis depends on C424, which acts as the Cysteine radical intermediate. Residues 622-645 (GNTPDGRRAGTPFAPGANPMHGRD) are disordered. The Glycine radical domain occupies 636–764 (PGANPMHGRD…VISRTFTQAL (129 aa)). Glycine radical is present on G739.

It belongs to the glycyl radical enzyme (GRE) family. PFL subfamily.

Its subcellular location is the cytoplasm. It catalyses the reaction 2-oxobutanoate + CoA = propanoyl-CoA + formate. The catalysed reaction is formate + acetyl-CoA = pyruvate + CoA. The protein operates within amino-acid degradation; L-threonine degradation via propanoate pathway; propanoate from L-threonine: step 2/4. Dependent on PFL-activase. Catalyzes the cleavage of 2-ketobutyrate to propionyl-CoA and formate. It can also use pyruvate as substrate. The protein is PFL-like enzyme TdcE (tdcE) of Escherichia coli (strain K12).